The sequence spans 689 residues: tRNA wybutosine-synthesizing protein 4 (689 aa).

The segment at M1–V33 is disordered. The segment covering R14 to K26 has biased composition (basic residues). S-adenosyl-L-methionine contacts are provided by residues R84, G111, D137, D183–L184, and E215.

Belongs to the methyltransferase superfamily. LCMT family.

The catalysed reaction is 7-[(3S)-3-amino-3-carboxypropyl]wyosine(37) in tRNA(Phe) + S-adenosyl-L-methionine = 7-[(3S)-(3-amino-3-methoxycarbonyl)propyl]wyosine(37) in tRNA(Phe) + S-adenosyl-L-homocysteine. It catalyses the reaction 7-[(3S)-(3-amino-3-methoxycarbonyl)propyl]wyosine(37) in tRNA(Phe) + S-adenosyl-L-methionine + CO2 = wybutosine(37) in tRNA(Phe) + S-adenosyl-L-homocysteine + 2 H(+). The protein operates within tRNA modification; wybutosine-tRNA(Phe) biosynthesis. Functionally, probable S-adenosyl-L-methionine-dependent methyltransferase that acts as a component of the wybutosine biosynthesis pathway. Wybutosine is a hyper modified guanosine with a tricyclic base found at the 3'-position adjacent to the anticodon of eukaryotic phenylalanine tRNA. May methylate the carboxyl group of leucine residues to form alpha-leucine ester residues. This is tRNA wybutosine-synthesizing protein 4 (PPM2) from Candida albicans (strain SC5314 / ATCC MYA-2876) (Yeast).